A 156-amino-acid chain; its full sequence is Arginine repressor (156 aa).

The protein belongs to the ArgR family.

The protein resides in the cytoplasm. The protein operates within amino-acid biosynthesis; L-arginine biosynthesis [regulation]. Regulates arginine biosynthesis genes. This chain is Arginine repressor, found in Vibrio vulnificus (strain CMCP6).